We begin with the raw amino-acid sequence, 314 residues long: Methionyl-tRNA formyltransferase (314 aa).

113-116 (SLLP) lines the (6S)-5,6,7,8-tetrahydrofolate pocket.

The protein belongs to the Fmt family.

It catalyses the reaction L-methionyl-tRNA(fMet) + (6R)-10-formyltetrahydrofolate = N-formyl-L-methionyl-tRNA(fMet) + (6S)-5,6,7,8-tetrahydrofolate + H(+). Its function is as follows. Attaches a formyl group to the free amino group of methionyl-tRNA(fMet). The formyl group appears to play a dual role in the initiator identity of N-formylmethionyl-tRNA by promoting its recognition by IF2 and preventing the misappropriation of this tRNA by the elongation apparatus. In Pseudomonas aeruginosa (strain ATCC 15692 / DSM 22644 / CIP 104116 / JCM 14847 / LMG 12228 / 1C / PRS 101 / PAO1), this protein is Methionyl-tRNA formyltransferase.